Reading from the N-terminus, the 321-residue chain is Biotin synthase (321 aa).

The 230-residue stretch at 44–273 (FCGNVFDLCT…DGFVRIAAGR (230 aa)) folds into the Radical SAM core domain. The [4Fe-4S] cluster site is built by Cys-62, Cys-66, and Cys-69. Ser-106, Cys-138, Cys-198, and Arg-268 together coordinate [2Fe-2S] cluster.

The protein belongs to the radical SAM superfamily. Biotin synthase family. As to quaternary structure, homodimer. The cofactor is [4Fe-4S] cluster. Requires [2Fe-2S] cluster as cofactor.

The enzyme catalyses (4R,5S)-dethiobiotin + (sulfur carrier)-SH + 2 reduced [2Fe-2S]-[ferredoxin] + 2 S-adenosyl-L-methionine = (sulfur carrier)-H + biotin + 2 5'-deoxyadenosine + 2 L-methionine + 2 oxidized [2Fe-2S]-[ferredoxin]. It functions in the pathway cofactor biosynthesis; biotin biosynthesis; biotin from 7,8-diaminononanoate: step 2/2. Catalyzes the conversion of dethiobiotin (DTB) to biotin by the insertion of a sulfur atom into dethiobiotin via a radical-based mechanism. The protein is Biotin synthase of Akkermansia muciniphila (strain ATCC BAA-835 / DSM 22959 / JCM 33894 / BCRC 81048 / CCUG 64013 / CIP 107961 / Muc).